The primary structure comprises 225 residues: Small ribosomal subunit protein uS5 (225 aa).

One can recognise an S5 DRBM domain in the interval 57–120 (LEEQVLDVKL…AQAKLSLIKV (64 aa)).

This sequence belongs to the universal ribosomal protein uS5 family. As to quaternary structure, part of the 30S ribosomal subunit. Contacts protein S4.

With S4 and S12 plays an important role in translational accuracy. The protein is Small ribosomal subunit protein uS5 of Methanococcus vannielii (strain ATCC 35089 / DSM 1224 / JCM 13029 / OCM 148 / SB).